A 186-amino-acid polypeptide reads, in one-letter code: Adenine phosphoribosyltransferase (186 aa).

Belongs to the purine/pyrimidine phosphoribosyltransferase family. As to quaternary structure, homodimer.

The protein resides in the cytoplasm. It catalyses the reaction AMP + diphosphate = 5-phospho-alpha-D-ribose 1-diphosphate + adenine. The protein operates within purine metabolism; AMP biosynthesis via salvage pathway; AMP from adenine: step 1/1. Its function is as follows. Catalyzes a salvage reaction resulting in the formation of AMP, that is energically less costly than de novo synthesis. The sequence is that of Adenine phosphoribosyltransferase from Xanthomonas oryzae pv. oryzae (strain MAFF 311018).